The chain runs to 383 residues: Erythronate-4-phosphate dehydrogenase (383 aa).

Serine 45 and threonine 66 together coordinate substrate. NAD(+)-binding positions include aspartate 146, threonine 174, 205-207 (ASR), and aspartate 231. Arginine 207 is a catalytic residue. Glutamate 236 is a catalytic residue. The active-site Proton donor is the histidine 253. Glycine 256 contributes to the NAD(+) binding site. Residue tyrosine 257 participates in substrate binding.

It belongs to the D-isomer specific 2-hydroxyacid dehydrogenase family. PdxB subfamily. In terms of assembly, homodimer.

It is found in the cytoplasm. It catalyses the reaction 4-phospho-D-erythronate + NAD(+) = (R)-3-hydroxy-2-oxo-4-phosphooxybutanoate + NADH + H(+). It participates in cofactor biosynthesis; pyridoxine 5'-phosphate biosynthesis; pyridoxine 5'-phosphate from D-erythrose 4-phosphate: step 2/5. Functionally, catalyzes the oxidation of erythronate-4-phosphate to 3-hydroxy-2-oxo-4-phosphonooxybutanoate. This Pseudomonas entomophila (strain L48) protein is Erythronate-4-phosphate dehydrogenase.